Consider the following 64-residue polypeptide: Large ribosomal subunit protein uL29 (64 aa).

This sequence belongs to the universal ribosomal protein uL29 family.

The sequence is that of Large ribosomal subunit protein uL29 from Acaryochloris marina (strain MBIC 11017).